The chain runs to 45 residues: Iota-conotoxin-like R11.10 (45 aa).

Disulfide bonds link cysteine 5/cysteine 19, cysteine 12/cysteine 22, cysteine 18/cysteine 27, and cysteine 21/cysteine 36. Leucine 43 carries the D-leucine modification. Arginine 45 is a propeptide (removed by a carboxypeptidase).

It belongs to the conotoxin I1 superfamily. In terms of tissue distribution, expressed by the venom duct.

The protein resides in the secreted. Functionally, iota-conotoxins bind to voltage-gated sodium channels (Nav) and act as agonists by shifting the voltage-dependence of activation to more hyperpolarized levels. Produces general excitatory symptoms. This is Iota-conotoxin-like R11.10 from Conus radiatus (Rayed cone).